A 452-amino-acid polypeptide reads, in one-letter code: Tubulin alpha-6 chain (452 aa).

Q11, E69, S138, G142, T143, T177, N204, and N226 together coordinate GTP. Residue E69 participates in Mg(2+) binding. Residue E252 is part of the active site.

This sequence belongs to the tubulin family. Dimer of alpha and beta chains. A typical microtubule is a hollow water-filled tube with an outer diameter of 25 nm and an inner diameter of 15 nM. Alpha-beta heterodimers associate head-to-tail to form protofilaments running lengthwise along the microtubule wall with the beta-tubulin subunit facing the microtubule plus end conferring a structural polarity. Microtubules usually have 13 protofilaments but different protofilament numbers can be found in some organisms and specialized cells. Mg(2+) serves as cofactor.

Its subcellular location is the cytoplasm. It is found in the cytoskeleton. It localises to the spindle. It catalyses the reaction GTP + H2O = GDP + phosphate + H(+). Tubulin is the major constituent of microtubules, a cylinder consisting of laterally associated linear protofilaments composed of alpha- and beta-tubulin heterodimers. Microtubules grow by the addition of GTP-tubulin dimers to the microtubule end, where a stabilizing cap forms. Below the cap, tubulin dimers are in GDP-bound state, owing to GTPase activity of alpha-tubulin. The sequence is that of Tubulin alpha-6 chain (TUBA6) from Naegleria pringsheimi (Amoeba).